The primary structure comprises 977 residues: Synaptopodin 2-like protein (977 aa).

Residues 6–88 (EVLVTLSGGA…QLVLTVQRLA (83 aa)) form the PDZ domain. 3 disordered regions span residues 91–226 (GPVQ…GPLR), 317–352 (AGTG…QSDW), and 364–677 (AGSR…EDAL). Phosphoserine is present on residues serine 108 and serine 111. The span at 109–123 (PLSPEPPGAPVPQPL) shows a compositional bias: pro residues. The residue at position 141 (threonine 141) is a Phosphothreonine. A phosphoserine mark is found at serine 143, serine 178, and serine 180. The segment covering 183-192 (EPAPTIPGPP) has biased composition (pro residues). Polar residues predominate over residues 194 to 203 (QGDSRVSSPS). The span at 216 to 226 (EALLLPHGPLR) shows a compositional bias: low complexity. Phosphoserine occurs at positions 345, 350, 374, 381, and 384. Arginine 386 is modified (omega-N-methylarginine). Pro residues predominate over residues 436–450 (PPSPLPAPVASPRPF). An omega-N-methylarginine mark is found at arginine 466, arginine 469, and arginine 479. Polar residues predominate over residues 510 to 525 (LSSQGPTPLPSFTSGV). 2 stretches are compositionally biased toward low complexity: residues 530–545 (PVSG…GPVT) and 572–595 (SAAA…ARPE). Over residues 596–607 (APAPGPGAPEPP) the composition is skewed to pro residues. Phosphoserine is present on residues serine 670 and serine 678. The interval 697–802 (TLPHVTPKTP…PSLPPSWKYS (106 aa)) is disordered. Pro residues predominate over residues 704–730 (KTPPPMAPKTPPPMTPKTPPPVAPKPP). Phosphothreonine occurs at positions 705 and 713. Omega-N-methylarginine is present on arginine 757. Positions 781-796 (GLGPRPRSPSPTPSLP) are enriched in pro residues. Residues serine 788 and serine 790 each carry the phosphoserine modification. Position 792 is a phosphothreonine (threonine 792). Omega-N-methylarginine occurs at positions 806, 826, and 889. Position 891 is a phosphoserine (serine 891). 2 positions are modified to phosphothreonine: threonine 892 and threonine 898. Arginine 910 is subject to Omega-N-methylarginine. Arginine 921 bears the Asymmetric dimethylarginine; alternate mark. Arginine 921 carries the omega-N-methylarginine; alternate modification. Positions 922 to 950 (TELASAPVPSPAPPPEAPRGLGASPSSCG) are disordered. Residues 929–938 (VPSPAPPPEA) show a composition bias toward pro residues. Omega-N-methylarginine occurs at positions 955 and 957.

It belongs to the synaptopodin family.

It localises to the cytoplasm. The protein localises to the cytoskeleton. Actin-associated protein that may play a role in modulating actin-based shape. The polypeptide is Synaptopodin 2-like protein (SYNPO2L) (Homo sapiens (Human)).